The chain runs to 181 residues: Ribulose bisphosphate carboxylase small subunit, chloroplastic 1 (181 aa).

The transit peptide at 1-54 directs the protein to the chloroplast; the sequence is MASSMLSSAAVVTSPAQATMVAPFTGLKSSSAFPVTRKANNDITSIVSNGGRVS.

This sequence belongs to the RuBisCO small chain family. Heterohexadecamer of 8 large and 8 small subunits.

It is found in the plastid. The protein localises to the chloroplast. Its function is as follows. RuBisCO catalyzes two reactions: the carboxylation of D-ribulose 1,5-bisphosphate, the primary event in carbon dioxide fixation, as well as the oxidative fragmentation of the pentose substrate. Both reactions occur simultaneously and in competition at the same active site. Although the small subunit is not catalytic it is essential for maximal activity. The polypeptide is Ribulose bisphosphate carboxylase small subunit, chloroplastic 1 (Brassica napus (Rape)).